The chain runs to 249 residues: Ribosomal RNA small subunit methyltransferase G (249 aa).

S-adenosyl-L-methionine is bound by residues G88, F93, 111–113 (DAT), 139–140 (AE), and R158.

The protein belongs to the methyltransferase superfamily. RNA methyltransferase RsmG family.

Its subcellular location is the cytoplasm. Specifically methylates the N7 position of a guanine in 16S rRNA. The protein is Ribosomal RNA small subunit methyltransferase G of Thermus thermophilus (strain ATCC BAA-163 / DSM 7039 / HB27).